The following is a 771-amino-acid chain: Polymeric immunoglobulin receptor (771 aa).

The signal sequence occupies residues M1–T18. The Extracellular segment spans residues K19 to K645. An Ig-like V-type 1; required for binding to polymeric IgA and IgM domain is found at P21–S120. C40 and C110 are oxidised to a cystine. 4 N-linked (GlcNAc...) asparagine glycosylation sites follow: N90, N147, N170, and N206. 4 Ig-like V-type domains span residues S135–V237, L245–I351, P352–A457, and P463–A563. Intrachain disulfides connect C152–C220, C257–C324, and C370–C440. N-linked (GlcNAc...) asparagine glycosylation is found at N420 and N471. C484 and C546 are oxidised to a cystine. The tract at residues Q622–S641 is disordered. Residues R627–S641 show a composition bias toward low complexity. A helical membrane pass occupies residues V646 to A668. At R669–A771 the chain is on the cytoplasmic side. Phosphoserine is present on residues S680, S689, S696, and S742.

As to quaternary structure, interacts (mainly via CDR1-like domain) with dimeric IgA. Interacts (mainly via CDR2-like domain) with pentameric IgM. In terms of assembly, either free or part of the secretory IgA (sIgA) complex that consists of two, four or five IgA monomers, and two additional non-Ig polypeptides, namely the JCHAIN and the secretory component (the proteolytic product of PIGR). Free secretory component interacts with bacterial antigens toxA of C.difficile and eae of E.coli. N-glycosylated. N-glycosylation is required for anchoring IgA molecules to mucus, but is not necessary for Ig binding.

It localises to the cell membrane. The protein localises to the secreted. Its function is as follows. Mediates selective transcytosis of polymeric IgA and IgM across mucosal epithelial cells. Binds polymeric IgA and IgM at the basolateral surface of epithelial cells. The complex is then transported across the cell to be secreted at the apical surface. During this process, a cleavage occurs that separates the extracellular (known as the secretory component) from the transmembrane segment. In terms of biological role, through its N-linked glycans ensures anchoring of secretory IgA (sIgA) molecules to mucus lining the epithelial surface to neutralize extracellular pathogens. On its own (free form) may act as a non-specific microbial scavenger to prevent pathogen interaction with epithelial cells. This is Polymeric immunoglobulin receptor (Pigr) from Mus musculus (Mouse).